The chain runs to 568 residues: Protein AF-9 (568 aa).

The region spanning 1-138 (MASSCAVQVK…EDFRRKLLKA (138 aa)) is the YEATS domain. Histone H3K9cr binding regions lie at residues 78–80 (YAG) and 106–108 (LHL). The segment at 138–475 (AGGDPNRSIH…PPPPLLKTNN (338 aa)) is disordered. Residues 149 to 190 (SSSSSSSSSSSSSSSSSSSSSSSSSSSSSSSSSSSSSSSSSS) are compositionally biased toward low complexity. Over residues 202–265 (EHKEKPSKDS…PKPMSKEPKP (64 aa)) the composition is skewed to basic and acidic residues. Ser288 and Ser294 each carry phosphoserine. Residues 295 to 300 (AKKRKK) carry the Nuclear localization signal motif. Over residues 303–313 (SEALFKSFSSA) the composition is skewed to low complexity. Over residues 322–349 (ADKKQIKDKSHVKMGKVKIESETSEKKK) the composition is skewed to basic and acidic residues. Lys339 participates in a covalent cross-link: Glycyl lysine isopeptide (Lys-Gly) (interchain with G-Cter in SUMO2). The segment covering 357 to 368 (DIVDPNDSDVEE) has biased composition (acidic residues). Residues 371-395 (SSKSDSEQPSPASSSSSSSSSFTPS) show a composition bias toward low complexity. Phosphoserine is present on residues Ser412 and Ser419. Residues 414-429 (DNEEESDEVEDNDNDS) are compositionally biased toward acidic residues. Low complexity predominate over residues 445 to 461 (VSLSDGSDSESSSASSP). Ser483 bears the Phosphoserine mark.

In terms of assembly, component of the super elongation complex (SEC), at least composed of EAF1, EAF2, CDK9, MLLT3/AF9, AFF (AFF1 or AFF4), the P-TEFb complex and ELL (ELL, ELL2 or ELL3). Interacts with BCOR. Interacts with CBX8. Interacts with ALKBH4. In terms of tissue distribution, enriched in undifferentiated hematopoietic stem cells in fetal liver, cord blood and bone marrow.

Its subcellular location is the nucleus. The protein resides in the chromosome. Crotonylated lysine binding is strongly inhibited by the peptide XL-07i, carrying a 2-furancarbonyl side chain and capped with a hydrophobic carboxybenzyl group. XL-07i targets the unique pi-pi-pi stacking interaction at the crotonylation recognition site. In terms of biological role, chromatin reader component of the super elongation complex (SEC), a complex required to increase the catalytic rate of RNA polymerase II transcription by suppressing transient pausing by the polymerase at multiple sites along the DNA. Specifically recognizes and binds acylated histone H3, with a preference for histone H3 that is crotonylated. Crotonylation marks active promoters and enhancers and confers resistance to transcriptional repressors. Recognizes and binds histone H3 crotonylated at 'Lys-9' (H3K9cr), and with slightly lower affinity histone H3 crotonylated at 'Lys-18' (H3K18cr). Also recognizes and binds histone H3 acetylated and butyrylated at 'Lys-9' (H3K9ac and H3K9bu, respectively), but with lower affinity than crotonylated histone H3. In the SEC complex, MLLT3 is required to recruit the complex to crotonylated histones. Recruitment of the SEC complex to crotonylated histones promotes recruitment of DOT1L on active chromatin to deposit histone H3 'Lys-79' methylation (H3K79me). Plays a key role in hematopoietic stem cell (HSC) maintenance by preserving, rather than conferring, HSC stemness. Acts by binding to the transcription start site of active genes in HSCs and sustaining level of H3K79me2, probably by recruiting DOT1L. This chain is Protein AF-9, found in Homo sapiens (Human).